The chain runs to 339 residues: Phenylalanine--tRNA ligase alpha subunit (339 aa).

Glu254 serves as a coordination point for Mg(2+).

This sequence belongs to the class-II aminoacyl-tRNA synthetase family. Phe-tRNA synthetase alpha subunit type 1 subfamily. Tetramer of two alpha and two beta subunits. Requires Mg(2+) as cofactor.

The protein localises to the cytoplasm. It carries out the reaction tRNA(Phe) + L-phenylalanine + ATP = L-phenylalanyl-tRNA(Phe) + AMP + diphosphate + H(+). This is Phenylalanine--tRNA ligase alpha subunit from Caldanaerobacter subterraneus subsp. tengcongensis (strain DSM 15242 / JCM 11007 / NBRC 100824 / MB4) (Thermoanaerobacter tengcongensis).